The sequence spans 729 residues: Probable cyclic di-GMP phosphodiesterase PdeA (729 aa).

The next 8 membrane-spanning stretches (helical) occupy residues 17–37, 41–61, 83–103, 126–146, 163–183, 214–234, 238–258, and 289–309; these read AFTL…LAII, YIFL…IFGW, FLQT…ACAI, FWLG…VGSF, IFTV…NMLF, AFTL…CTPY, FIAG…VGKL, and YSLA…LYMV. Residues 348–476 enclose the GGDEF domain; it reads AGKSFCCLRI…AHHHVLALDS (129 aa). Positions 488–729 constitute an EAL domain; it reads QVLLLNTIRT…LIGRPQPLAD (242 aa).

It localises to the cell membrane. It carries out the reaction 3',3'-c-di-GMP + H2O = 5'-phosphoguanylyl(3'-&gt;5')guanosine + H(+). Phosphodiesterase (PDE) that catalyzes the hydrolysis of cyclic-di-GMP (c-di-GMP) to 5'-pGpG. The protein is Probable cyclic di-GMP phosphodiesterase PdeA of Escherichia coli (strain K12).